The primary structure comprises 241 residues: Leucyl/phenylalanyl-tRNA--protein transferase (241 aa).

Belongs to the L/F-transferase family.

It is found in the cytoplasm. The enzyme catalyses N-terminal L-lysyl-[protein] + L-leucyl-tRNA(Leu) = N-terminal L-leucyl-L-lysyl-[protein] + tRNA(Leu) + H(+). The catalysed reaction is N-terminal L-arginyl-[protein] + L-leucyl-tRNA(Leu) = N-terminal L-leucyl-L-arginyl-[protein] + tRNA(Leu) + H(+). It carries out the reaction L-phenylalanyl-tRNA(Phe) + an N-terminal L-alpha-aminoacyl-[protein] = an N-terminal L-phenylalanyl-L-alpha-aminoacyl-[protein] + tRNA(Phe). Functionally, functions in the N-end rule pathway of protein degradation where it conjugates Leu, Phe and, less efficiently, Met from aminoacyl-tRNAs to the N-termini of proteins containing an N-terminal arginine or lysine. In Colwellia psychrerythraea (strain 34H / ATCC BAA-681) (Vibrio psychroerythus), this protein is Leucyl/phenylalanyl-tRNA--protein transferase.